The primary structure comprises 246 residues: Phosphomannomutase 2 (246 aa).

Alanine 2 carries the post-translational modification N-acetylalanine. The active-site Nucleophile is aspartate 12. Aspartate 12 and aspartate 14 together coordinate Mg(2+). Catalysis depends on aspartate 14, which acts as the Proton donor/acceptor. Positions 21, 123, 134, and 141 each coordinate alpha-D-mannose 1-phosphate. At lysine 149 the chain carries N6-acetyllysine. The alpha-D-mannose 1-phosphate site is built by serine 179 and aspartate 181. 4 residues coordinate Mg(2+): aspartate 209, phenylalanine 221, aspartate 223, and threonine 226.

It belongs to the eukaryotic PMM family. As to quaternary structure, homodimer.

The protein resides in the cytoplasm. The catalysed reaction is alpha-D-mannose 1-phosphate = D-mannose 6-phosphate. It participates in nucleotide-sugar biosynthesis; GDP-alpha-D-mannose biosynthesis; alpha-D-mannose 1-phosphate from D-fructose 6-phosphate: step 2/2. Involved in the synthesis of the GDP-mannose and dolichol-phosphate-mannose required for a number of critical mannosyl transfer reactions. In Macaca fascicularis (Crab-eating macaque), this protein is Phosphomannomutase 2 (PMM2).